Here is a 706-residue protein sequence, read N- to C-terminus: Polyribonucleotide nucleotidyltransferase (706 aa).

Mg(2+)-binding residues include aspartate 487 and aspartate 493. Residues 553–612 (PRLFTMKINQDKIREVIGKGGETIRAITAETGTEINIAEDGTITIAATTQEAGDAAKKRI) enclose the KH domain. The S1 motif domain occupies 622–692 (GKVYEGTVVK…DRGRVRLSIK (71 aa)).

This sequence belongs to the polyribonucleotide nucleotidyltransferase family. The cofactor is Mg(2+).

The protein localises to the cytoplasm. The enzyme catalyses RNA(n+1) + phosphate = RNA(n) + a ribonucleoside 5'-diphosphate. Functionally, involved in mRNA degradation. Catalyzes the phosphorolysis of single-stranded polyribonucleotides processively in the 3'- to 5'-direction. This is Polyribonucleotide nucleotidyltransferase from Neisseria meningitidis serogroup A / serotype 4A (strain DSM 15465 / Z2491).